We begin with the raw amino-acid sequence, 240 residues long: Probable transcriptional regulatory protein SO_3401 (240 aa).

The protein belongs to the TACO1 family.

The protein localises to the cytoplasm. The chain is Probable transcriptional regulatory protein SO_3401 from Shewanella oneidensis (strain ATCC 700550 / JCM 31522 / CIP 106686 / LMG 19005 / NCIMB 14063 / MR-1).